A 184-amino-acid polypeptide reads, in one-letter code: Photosystem I assembly protein Ycf4 (184 aa).

A run of 2 helical transmembrane segments spans residues 21–43 (NYFW…VSSY) and 63–85 (GIVM…FTIF).

Belongs to the Ycf4 family.

Its subcellular location is the plastid. It is found in the chloroplast thylakoid membrane. Its function is as follows. Seems to be required for the assembly of the photosystem I complex. In Chaetosphaeridium globosum (Charophycean green alga), this protein is Photosystem I assembly protein Ycf4.